Consider the following 493-residue polypeptide: tRNA-dihydrouridine(20) synthase [NAD(P)+]-like (493 aa).

The segment at 1-333 is catalytic domain; that stretch reads MILNSLSLCY…TQELDAQQAR (333 aa). FMN-binding positions include 18-20, Glu43, and Gln87; that span reads PMV. Cys116 acts as the Proton donor in catalysis. FMN is bound by residues Lys155, His183, 214–216, and 242–243; these read NGG and AR. Positions 330-342 are enriched in polar residues; the sequence is QQARLSAKTSEQT. The interval 330–349 is disordered; that stretch reads QQARLSAKTSEQTGEPAEDT. Interaction with tRNA stretches follow at residues 367 to 371 and 420 to 424; these read QITPK and KLAEQ. The 68-residue stretch at 369-436 folds into the DRBM domain; sequence TPKMCLLEWC…AIVCLRSQGL (68 aa). The disordered stretch occupies residues 438 to 493; that stretch reads EGRLGEESPSLHKRKREAPDQDPGGPRAQELAQPGDLCKKPFVALGSGEESPLEGW. A phosphoserine mark is found at Ser445 and Ser488.

The protein belongs to the Dus family. Dus2 subfamily. In terms of assembly, interacts with EPRS1. Interacts (via DRBM domain) with PRKRA and EIF2AK2/PKR (via DRBM 1 domain). It depends on FMN as a cofactor. As to expression, weak expression in heart, placenta and skeletal muscle. Up-regulated in most lung cancer cells (at protein level).

The protein localises to the cytoplasm. It localises to the endoplasmic reticulum. The catalysed reaction is 5,6-dihydrouridine(20) in tRNA + NADP(+) = uridine(20) in tRNA + NADPH + H(+). Its activity is regulated as follows. Inhibited by canertinib, PD 168393, AST-1306 and PF-6274484. Its function is as follows. Catalyzes the NADPH-dependent synthesis of dihydrouridine, a modified base found in the D-loop of most tRNAs. Specifically modifies U20 in cytoplasmic tRNAs. Activity depends on the presence of guanosine at position 19 in the tRNA substrate. Negatively regulates the activation of EIF2AK2/PKR. In Homo sapiens (Human), this protein is tRNA-dihydrouridine(20) synthase [NAD(P)+]-like (DUS2).